We begin with the raw amino-acid sequence, 237 residues long: Octopine transport system permease protein OccQ (237 aa).

One can recognise an ABC transmembrane type-1 domain in the interval 22–222 (TAMTMAVAFS…LITFVSGQVF (201 aa)). Helical transmembrane passes span 26 to 46 (MAVA…GAAA), 72 to 92 (LVIY…ASLF), 96 to 116 (GFVG…VSGA), and 202 to 222 (SFYL…GQVF).

The protein belongs to the binding-protein-dependent transport system permease family. HisMQ subfamily.

It localises to the cell inner membrane. Component of the octopine active transport system probably consisting of four subunits: Q, M, P and T. In Agrobacterium tumefaciens (strain Ach5), this protein is Octopine transport system permease protein OccQ (occQ).